Reading from the N-terminus, the 332-residue chain is Ubiquinol oxidase 1a, mitochondrial (332 aa).

The transit peptide at 1-54 (MSSRMAGSAILRHVGGVRLFTASATSPAAAAAAAARPFLAGGEAVPGVWGLRLM) directs the protein to the mitochondrion. Residues 157-177 (AMMLETVAAVPGMVGGMLLHL) form a helical membrane-spanning segment. Residues Glu161, Glu200, and His203 each contribute to the Fe cation site. A helical transmembrane segment spans residues 219–239 (ALVITVQGVFFNAYFLGYLLS). Residues Glu251, Glu302, and His305 each contribute to the Fe cation site.

This sequence belongs to the alternative oxidase family. Homodimer; disulfide-linked. Fe cation serves as cofactor. Expressed in roots, leaf sheaths and leaf blades.

It localises to the mitochondrion inner membrane. The enzyme catalyses 2 a ubiquinol + O2 = 2 a ubiquinone + 2 H2O. Catalyzes the cyanide-resistant oxidation of ubiquinol and the reduction of molecular oxygen to water, but does not translocate protons and consequently is not linked to oxidative phosphorylation. May increase respiration when the cytochrome respiratory pathway is restricted, or in response to low temperatures. In Oryza sativa subsp. japonica (Rice), this protein is Ubiquinol oxidase 1a, mitochondrial.